Reading from the N-terminus, the 393-residue chain is Staphopain B (393 aa).

A signal peptide spans 1 to 36 (MNSSCKSRVFNIISIIMVSMLILSLGAFANNNKAKA). Positions 37 to 219 (DSHSKQLEIN…KVEENEAIQE (183 aa)) are excised as a propeptide. Residues Cys243, His340, and Asn360 contribute to the active site.

The protein belongs to the peptidase C47 family. In terms of assembly, in the cytoplasm, prematurely activated/folded SspB forms a stable non-covalent complex with SspC. In terms of processing, proteolytically cleaved by staphylococcal serine protease (SspA).

The protein localises to the secreted. Prematurely activated/folded staphopain B is inhibited by staphostatin B (SspC), which is probably required to protect staphylococcal cytoplasmic proteins from degradation by SspB. Also inactivated by E-64 and stimulated by EDTA. Functionally, cysteine protease that plays an important role in the inhibition of host innate immune response. Degrades host elastin, fibrogen, fibronectin and kininogen. Blocks phagocytosis of opsonised S.aureus by neutrophils and monocytes by inducing their death in a proteolytic activity-dependent manner. Decreases surface expression of the 'don't eat me' signal CD31 on neutrophils. Cleaves host galectin-3/LGALS3, thereby inhibiting the neutrophil-activating ability of the lectin. The protein is Staphopain B (sspB) of Staphylococcus aureus (strain NCTC 8325 / PS 47).